Reading from the N-terminus, the 761-residue chain is RNA-binding protein mde7 (761 aa).

Polar residues-rich tracts occupy residues 31 to 46 (PNHSSLSEQQSTNSLL), 58 to 83 (SRNSTTNPLNLLYTQTQQPARSTTPF), and 99 to 110 (SRNNSYLQGTAE). Disordered stretches follow at residues 31–110 (PNHS…GTAE) and 188–213 (HYFDDTDKSVHSKSSSGSNSLSEASN). Basic and acidic residues predominate over residues 188–197 (HYFDDTDKSV). Residues 199 to 211 (SKSSSGSNSLSEA) show a composition bias toward low complexity. Positions 223–289 (IVGGLPDDFD…SSTNNFTIIQ (67 aa)) constitute an RRM 1 domain. Residues 442–466 (ESNSLSNQPNNFAQTSFDYQPNHPN) are compositionally biased toward polar residues. Positions 442–468 (ESNSLSNQPNNFAQTSFDYQPNHPNAI) are disordered. Positions 602 to 679 (NTIYVGNLSN…GGIRLSYSKN (78 aa)) constitute an RRM 2 domain.

The polypeptide is RNA-binding protein mde7 (mde7) (Schizosaccharomyces pombe (strain 972 / ATCC 24843) (Fission yeast)).